The following is a 194-amino-acid chain: Cytochrome bo(3) ubiquinol oxidase subunit 3 (194 aa).

The Cytoplasmic portion of the chain corresponds to 1-18 (MKKKYKIDTNIFSKELLG). The chain crosses the membrane as a helical span at residues 19–41 (FWLYLMSDCIIFCTLFSVYFILV). The Extracellular segment spans residues 42–55 (DNVAQGPSGHNIFQ). A helical transmembrane segment spans residues 56–78 (NNLIIIETFLLLFSSFSCNLVLF). Residues 79 to 84 (EMKNKN) are Cytoplasmic-facing. A helical membrane pass occupies residues 85 to 107 (LYMVFLWLGITFLLGLLFVFLEL). Residues 108–126 (FEFFHLINLGFGPTRSGFL) are Extracellular-facing. The chain crosses the membrane as a helical span at residues 127 to 149 (SSFFVLIATHGIHVISGLIWIIV). The Cytoplasmic segment spans residues 150–169 (MIKYVYTFNITNLIYYRMLC). The helical transmembrane segment at 170–192 (LNLFWHFLDIVWVFIFSFVYLFG) threads the bilayer. Residues 193–194 (MV) lie on the Extracellular side of the membrane.

This sequence belongs to the cytochrome c oxidase subunit 3 family. Heterooctamer of two A chains, two B chains, two C chains and two D chains.

It is found in the cell membrane. Its function is as follows. Cytochrome bo(3) ubiquinol terminal oxidase is the component of the aerobic respiratory chain of E.coli that predominates when cells are grown at high aeration. Has proton pump activity across the membrane in addition to electron transfer, pumping 2 protons/electron. The sequence is that of Cytochrome bo(3) ubiquinol oxidase subunit 3 (cyoC) from Buchnera aphidicola subsp. Baizongia pistaciae (strain Bp).